We begin with the raw amino-acid sequence, 271 residues long: Probable ribosomal RNA small subunit methyltransferase A (271 aa).

Residues histidine 19, leucine 21, glycine 46, glutamate 67, aspartate 92, and asparagine 107 each contribute to the S-adenosyl-L-methionine site.

This sequence belongs to the class I-like SAM-binding methyltransferase superfamily. rRNA adenine N(6)-methyltransferase family. RsmA subfamily.

It is found in the cytoplasm. Its function is as follows. Specifically dimethylates two adjacent adenosines in the loop of a conserved hairpin near the 3'-end of 16S rRNA in the 30S particle. May play a critical role in biogenesis of 30S subunits. The chain is Probable ribosomal RNA small subunit methyltransferase A from Methanosarcina mazei (strain ATCC BAA-159 / DSM 3647 / Goe1 / Go1 / JCM 11833 / OCM 88) (Methanosarcina frisia).